The sequence spans 165 residues: Cysteine-rich hydrophobic domain-containing protein 2 (165 aa).

A coiled-coil region spans residues 1 to 26; that stretch reads MADFDEIYEEEEDEERALEEQLLKYS. A CHIC motif (Cys-rich) motif is present at residues 88 to 106; the sequence is CGCLCCCCTLGCSMWPVIC.

It belongs to the CHIC family. In terms of processing, palmitoylation in the CHIC motif is required for membrane association.

The protein localises to the membrane. Its subcellular location is the golgi apparatus. This chain is Cysteine-rich hydrophobic domain-containing protein 2 (Chic2), found in Mus musculus (Mouse).